An 896-amino-acid polypeptide reads, in one-letter code: Rho GTPase-activating protein gacM (896 aa).

Residues 1-97 are disordered; that stretch reads MSSFIGWKKN…SSNDTIGKSS (97 aa). The segment covering 10 to 26 has biased composition (low complexity); sequence NSNSGGTPGASPTSSSP. A compositionally biased stretch (polar residues) spans 27-38; that stretch reads LNSTISNANSVS. 2 stretches are compositionally biased toward low complexity: residues 45 to 57 and 65 to 97; these read SISNTSSSSLSSS and NSNNNSPPLSSSSSSTSTYSTPNSSNDTIGKSS. The Rho-GAP domain maps to 139 to 330; that stretch reads QPINPNTEFG…LWIEEFDMIS (192 aa). 4 stretches are compositionally biased toward low complexity: residues 375–391, 400–427, 448–460, and 473–506; these read IQQQLQQQQQQQQQSHP, SSLSSSSLQVNLQTSPKSPQSPKLLLPT, PTPTTTPTLTPQT, and NNNSNNNNNNNNNNSNNNNNNNNNNNNNNNNNNN. Disordered regions lie at residues 375-514 and 701-770; these read IQQQ…GSPL and LPTG…ENQI. A compositionally biased stretch (polar residues) spans 702 to 711; that stretch reads PTGSSWSDFE. 2 stretches are compositionally biased toward low complexity: residues 712–743 and 751–761; these read NNSSNNNININNNINNSSSNNNNNNSSPNSSP and SNGLNSSSNSN.

It localises to the cytoplasm. Its function is as follows. Rho GTPase-activating protein involved in the signal transduction pathway. This Dictyostelium discoideum (Social amoeba) protein is Rho GTPase-activating protein gacM (gacM).